The chain runs to 495 residues: Glycerol kinase (495 aa).

ADP is bound at residue Thr-11. Residues Thr-11, Thr-12, and Ser-13 each contribute to the ATP site. Thr-11 contributes to the sn-glycerol 3-phosphate binding site. Residue Arg-15 coordinates ADP. Positions 81, 82, 133, and 242 each coordinate sn-glycerol 3-phosphate. Glycerol contacts are provided by Arg-81, Glu-82, Tyr-133, Asp-242, and Gln-243. ADP is bound by residues Thr-264 and Gly-307. ATP is bound by residues Thr-264, Gly-307, Gln-311, and Gly-408. Gly-408 provides a ligand contact to ADP.

It belongs to the FGGY kinase family.

It catalyses the reaction glycerol + ATP = sn-glycerol 3-phosphate + ADP + H(+). Its pathway is polyol metabolism; glycerol degradation via glycerol kinase pathway; sn-glycerol 3-phosphate from glycerol: step 1/1. With respect to regulation, inhibited by fructose 1,6-bisphosphate (FBP). Its function is as follows. Key enzyme in the regulation of glycerol uptake and metabolism. Catalyzes the phosphorylation of glycerol to yield sn-glycerol 3-phosphate. This Geobacter sp. (strain M21) protein is Glycerol kinase.